Here is a 1365-residue protein sequence, read N- to C-terminus: Killer toxin-resistance protein 5 (1365 aa).

The N-terminal stretch at 1 to 17 (MRLLALVLLLLCAPLRA) is a signal peptide. Asparagine 115, asparagine 228, asparagine 293, asparagine 457, asparagine 519, asparagine 523, asparagine 644, asparagine 870, asparagine 1091, asparagine 1150, and asparagine 1195 each carry an N-linked (GlcNAc...) asparagine glycan. Positions 1334-1365 (FASSPGDEDVPGESVSSKYQDSDNAAPLHDEL) are disordered. Polar residues predominate over residues 1347–1356 (SVSSKYQDSD). Residues 1362-1365 (HDEL) carry the Prevents secretion from ER motif.

It to D.melanogaster UGGG.

The protein resides in the endoplasmic reticulum lumen. Functionally, required for (1-&gt;6)-beta-D-glucan synthesis and normal cell growth. The polypeptide is Killer toxin-resistance protein 5 (KRE5) (Saccharomyces cerevisiae (strain ATCC 204508 / S288c) (Baker's yeast)).